Reading from the N-terminus, the 294-residue chain is Pyridoxal 5'-phosphate synthase subunit PdxS (294 aa).

Aspartate 24 lines the D-ribose 5-phosphate pocket. Lysine 81 (schiff-base intermediate with D-ribose 5-phosphate) is an active-site residue. Residue glycine 153 participates in D-ribose 5-phosphate binding. A D-glyceraldehyde 3-phosphate-binding site is contributed by arginine 165. Residues glycine 214 and 235 to 236 (GS) contribute to the D-ribose 5-phosphate site.

The protein belongs to the PdxS/SNZ family. As to quaternary structure, homohexamer and homododecamer. In the presence of PdxT, forms a dodecamer of heterodimers.

It catalyses the reaction aldehydo-D-ribose 5-phosphate + D-glyceraldehyde 3-phosphate + L-glutamine = pyridoxal 5'-phosphate + L-glutamate + phosphate + 3 H2O + H(+). It functions in the pathway cofactor biosynthesis; pyridoxal 5'-phosphate biosynthesis. Functionally, catalyzes the formation of pyridoxal 5'-phosphate from ribose 5-phosphate (RBP), glyceraldehyde 3-phosphate (G3P) and ammonia. The ammonia is provided by the PdxT subunit. Can also use ribulose 5-phosphate and dihydroxyacetone phosphate as substrates, resulting from enzyme-catalyzed isomerization of RBP and G3P, respectively. The sequence is that of Pyridoxal 5'-phosphate synthase subunit PdxS from Bacillus subtilis (strain 168).